The sequence spans 163 residues: Nucleotide-binding protein Cla_1551 (163 aa).

This sequence belongs to the YajQ family.

In terms of biological role, nucleotide-binding protein. In Campylobacter lari (strain RM2100 / D67 / ATCC BAA-1060), this protein is Nucleotide-binding protein Cla_1551.